Here is a 394-residue protein sequence, read N- to C-terminus: Elongation factor Tu 2 (394 aa).

The tr-type G domain occupies 10 to 204 (KPHVNVGTIG…ALDTYIPEPE (195 aa)). Residues 19–26 (GHVDHGKT) form a G1 region. Position 19–26 (19–26 (GHVDHGKT)) interacts with GTP. Thr-26 is a Mg(2+) binding site. Residues 60–64 (GITIS) are G2. The G3 stretch occupies residues 81–84 (DCPG). Residues 81–85 (DCPGH) and 136–139 (NKCD) contribute to the GTP site. Residues 136-139 (NKCD) form a G4 region. Positions 174-176 (SAL) are G5.

Belongs to the TRAFAC class translation factor GTPase superfamily. Classic translation factor GTPase family. EF-Tu/EF-1A subfamily. In terms of assembly, monomer.

The protein localises to the cytoplasm. The enzyme catalyses GTP + H2O = GDP + phosphate + H(+). Its function is as follows. GTP hydrolase that promotes the GTP-dependent binding of aminoacyl-tRNA to the A-site of ribosomes during protein biosynthesis. This chain is Elongation factor Tu 2, found in Vibrio vulnificus (strain CMCP6).